The sequence spans 503 residues: Putative cytochrome P450 71A28 (503 aa).

Residues 1–21 (MILISLCFTTFLAFLFLNPLL) form a helical membrane-spanning segment. Cys-443 provides a ligand contact to heme.

It belongs to the cytochrome P450 family. The cofactor is heme.

It is found in the membrane. This Arabidopsis thaliana (Mouse-ear cress) protein is Putative cytochrome P450 71A28 (CYP71A28).